The primary structure comprises 1193 residues: DNA-directed RNA polymerase subunit beta (1193 aa).

Residues 1149-1162 (EEEIEMRDLEDEED) are compositionally biased toward acidic residues. Residues 1149–1193 (EEEIEMRDLEDEEDAKQADGLALSGDEEPEETASADVERDVVTKE) form a disordered region. Positions 1184–1193 (DVERDVVTKE) are enriched in basic and acidic residues.

This sequence belongs to the RNA polymerase beta chain family. RNAP is composed of a core of 2 alpha, a beta and a beta' subunit. The core is associated with a delta subunit, and at least one of epsilon or omega. When a sigma factor is associated with the core the holoenzyme is formed, which can initiate transcription.

The catalysed reaction is RNA(n) + a ribonucleoside 5'-triphosphate = RNA(n+1) + diphosphate. Its function is as follows. DNA-dependent RNA polymerase catalyzes the transcription of DNA into RNA using the four ribonucleoside triphosphates as substrates. This Bacillus subtilis (strain 168) protein is DNA-directed RNA polymerase subunit beta.